Reading from the N-terminus, the 309-residue chain is HPr kinase/phosphorylase (309 aa).

Catalysis depends on residues histidine 139 and lysine 160. An ATP-binding site is contributed by 154 to 161 (GESGIGKS). Residue serine 161 coordinates Mg(2+). The active-site Proton acceptor; for phosphorylation activity. Proton donor; for dephosphorylation activity is aspartate 178. The segment at 202 to 211 (IELRGIGIID) is important for the catalytic mechanism of both phosphorylation and dephosphorylation. Glutamate 203 contacts Mg(2+). Arginine 244 is an active-site residue. The segment at 265 to 270 (PIRPGR) is important for the catalytic mechanism of dephosphorylation.

Belongs to the HPrK/P family. In terms of assembly, homohexamer. Mg(2+) serves as cofactor.

The enzyme catalyses [HPr protein]-L-serine + ATP = [HPr protein]-O-phospho-L-serine + ADP + H(+). It carries out the reaction [HPr protein]-O-phospho-L-serine + phosphate + H(+) = [HPr protein]-L-serine + diphosphate. Its function is as follows. Catalyzes the ATP- as well as the pyrophosphate-dependent phosphorylation of a specific serine residue in HPr, a phosphocarrier protein of the phosphoenolpyruvate-dependent sugar phosphotransferase system (PTS). HprK/P also catalyzes the pyrophosphate-producing, inorganic phosphate-dependent dephosphorylation (phosphorolysis) of seryl-phosphorylated HPr (P-Ser-HPr). The two antagonistic activities of HprK/P are regulated by several intracellular metabolites, which change their concentration in response to the absence or presence of rapidly metabolisable carbon sources (glucose, fructose, etc.) in the growth medium. Therefore, by controlling the phosphorylation state of HPr, HPrK/P is a sensor enzyme that plays a major role in the regulation of carbon metabolism and sugar transport: it mediates carbon catabolite repression (CCR), and regulates PTS-catalyzed carbohydrate uptake and inducer exclusion. The protein is HPr kinase/phosphorylase of Lachnoclostridium phytofermentans (strain ATCC 700394 / DSM 18823 / ISDg) (Clostridium phytofermentans).